The sequence spans 135 residues: Ribonuclease VapC5 (135 aa).

A PINc domain is found at 9-130; it reads VLDTSVFIAT…FAALDGAASV (122 aa). Asp11 and Asp100 together coordinate Mg(2+).

This sequence belongs to the PINc/VapC protein family. Forms a complex with VapB5. It depends on Mg(2+) as a cofactor.

The protein resides in the secreted. Functionally, probable toxic component of a type II toxin-antitoxin (TA) system. The cognate antitoxin is VapB5. Has limited RNase activity on substrates; activity is seen with a VapC5-VapB5 complex. This Mycobacterium tuberculosis (strain ATCC 25618 / H37Rv) protein is Ribonuclease VapC5.